A 427-amino-acid chain; its full sequence is 3-phosphoshikimate 1-carboxyvinyltransferase (427 aa).

Positions 20, 21, and 25 each coordinate 3-phosphoshikimate. Residue Lys20 participates in phosphoenolpyruvate binding. Phosphoenolpyruvate contacts are provided by Gly92 and Arg120. Ser166, Gln168, Asp312, and Lys339 together coordinate 3-phosphoshikimate. Gln168 contributes to the phosphoenolpyruvate binding site. Asp312 functions as the Proton acceptor in the catalytic mechanism. Positions 343 and 385 each coordinate phosphoenolpyruvate.

The protein belongs to the EPSP synthase family. In terms of assembly, monomer.

The protein resides in the cytoplasm. It catalyses the reaction 3-phosphoshikimate + phosphoenolpyruvate = 5-O-(1-carboxyvinyl)-3-phosphoshikimate + phosphate. It participates in metabolic intermediate biosynthesis; chorismate biosynthesis; chorismate from D-erythrose 4-phosphate and phosphoenolpyruvate: step 6/7. Functionally, catalyzes the transfer of the enolpyruvyl moiety of phosphoenolpyruvate (PEP) to the 5-hydroxyl of shikimate-3-phosphate (S3P) to produce enolpyruvyl shikimate-3-phosphate and inorganic phosphate. The sequence is that of 3-phosphoshikimate 1-carboxyvinyltransferase from Streptococcus thermophilus (strain ATCC BAA-491 / LMD-9).